We begin with the raw amino-acid sequence, 403 residues long: Semaphorin-like protein A39 (403 aa).

An N-terminal signal peptide occupies residues Met-1–Gly-14. One can recognise a Sema domain in the interval Ile-15–Met-403.

The protein belongs to the semaphorin family. As to quaternary structure, interacts with host VESPR.

The protein localises to the secreted. Functionally, acts as a semaphorin-like protein and binds to host plexin C1 receptor. May alter the movement of host plexin C1-expressing cells including dendritic cells, monocytes, or granulocytes in the proximity of infected cells. May also regulate host cell cytoskeleton of neighboring cells to improve viral infection. The chain is Semaphorin-like protein A39 from Homo sapiens (Human).